The sequence spans 368 residues: Isopentenyl-diphosphate delta-isomerase (368 aa).

7–8 (RK) serves as a coordination point for substrate. FMN is bound by residues Thr65, 66 to 68 (GMT), Ser96, and Asn125. Residue 96–98 (SQR) participates in substrate binding. A substrate-binding site is contributed by Gln160. Glu161 lines the Mg(2+) pocket. Residues Lys193, Ser218, Thr223, 275 to 277 (GIR), and 296 to 297 (AL) contribute to the FMN site.

It belongs to the IPP isomerase type 2 family. Homooctamer. Dimer of tetramers. Requires FMN as cofactor. The cofactor is NADPH. It depends on Mg(2+) as a cofactor.

It localises to the cytoplasm. It catalyses the reaction isopentenyl diphosphate = dimethylallyl diphosphate. Its function is as follows. Involved in the biosynthesis of isoprenoids. Catalyzes the 1,3-allylic rearrangement of the homoallylic substrate isopentenyl (IPP) to its allylic isomer, dimethylallyl diphosphate (DMAPP). This Saccharolobus shibatae (strain ATCC 51178 / DSM 5389 / JCM 8931 / NBRC 15437 / B12) (Sulfolobus shibatae) protein is Isopentenyl-diphosphate delta-isomerase.